We begin with the raw amino-acid sequence, 394 residues long: Phosphatidylinositol 4-phosphate 5-kinase-like protein 1 (394 aa).

The region spanning Asp36–Thr393 is the PIPK domain.

Heterodimerizes with other type I phosphatidylinositol 4-phosphate 5-kinase.

Its subcellular location is the cytoplasm. It localises to the membrane. It carries out the reaction a 1,2-diacyl-sn-glycero-3-phospho-(1D-myo-inositol 4-phosphate) + ATP = a 1,2-diacyl-sn-glycero-3-phospho-(1D-myo-inositol-4,5-bisphosphate) + ADP + H(+). May act as a scaffold to localize and regulate type I PI(4)P 5-kinases to specific compartments within the cell, where they generate PI(4,5)P2 for actin nucleation, signaling and scaffold protein recruitment and conversion to PI(3,4,5)P3. The protein is Phosphatidylinositol 4-phosphate 5-kinase-like protein 1 (PIP5KL1) of Homo sapiens (Human).